Here is a 554-residue protein sequence, read N- to C-terminus: Valerianol synthase TPS1C (554 aa).

Mg(2+) contacts are provided by D307 and D311. The short motif at 326 to 330 is the DDXXD motif element; the sequence is VQRWD. 3 residues coordinate Mg(2+): D452, S456, and E460.

The protein belongs to the terpene synthase family. Mg(2+) serves as cofactor.

The enzyme catalyses (2E,6E)-farnesyl diphosphate + H2O = valerianol + diphosphate. The protein operates within secondary metabolite biosynthesis; terpenoid biosynthesis. Its function is as follows. Terpene synthase that catalyzes the biosynthesis of the terpene valerianol, which is a volatile compound of floral scent. In Camellia hiemalis (Camellia), this protein is Valerianol synthase TPS1C.